The primary structure comprises 121 residues: Basic phospholipase A2 homolog (121 aa).

Disulfide bonds link Cys26–Cys115, Cys28–Cys44, Cys43–Cys95, Cys49–Cys121, Cys50–Cys88, Cys57–Cys81, and Cys75–Cys86.

The protein belongs to the phospholipase A2 family. Group II subfamily. K49 sub-subfamily. Homodimer. In terms of tissue distribution, expressed by the venom gland.

It localises to the secreted. Snake venom phospholipase A2 homolog that lacks enzymatic activity, but has myotoxic and cytolytic activities. The sequence is that of Basic phospholipase A2 homolog from Metlapilcoatlus nummifer (Mexican jumping pitviper).